The following is a 217-amino-acid chain: Meiotically up-regulated gene 37 protein (217 aa).

Its function is as follows. Has a role in meiosis. This chain is Meiotically up-regulated gene 37 protein (mug37), found in Schizosaccharomyces pombe (strain 972 / ATCC 24843) (Fission yeast).